The primary structure comprises 367 residues: Flagellar P-ring protein (367 aa).

An N-terminal signal peptide occupies residues 1 to 21; it reads MKIIQTFFIITLLWLSQGVQA.

The protein belongs to the FlgI family. The basal body constitutes a major portion of the flagellar organelle and consists of four rings (L,P,S, and M) mounted on a central rod.

It is found in the periplasm. The protein localises to the bacterial flagellum basal body. Functionally, assembles around the rod to form the L-ring and probably protects the motor/basal body from shearing forces during rotation. In Nitrosococcus oceani (strain ATCC 19707 / BCRC 17464 / JCM 30415 / NCIMB 11848 / C-107), this protein is Flagellar P-ring protein.